The chain runs to 411 residues: Serpin A3-3 (411 aa).

The N-terminal stretch at 1–24 (MRAERLSPLLALGLLVAGIRSVHC) is a signal peptide. Residues Asn-100, Asn-180, Asn-230, Asn-264, and Asn-318 are each glycosylated (N-linked (GlcNAc...) asparagine).

It belongs to the serpin family. In terms of assembly, homodimer.

The protein resides in the cytoplasmic vesicle. It localises to the secretory vesicle. Its subcellular location is the chromaffin granule. It is found in the secreted. In terms of biological role, serine protease inhibitor. Strongly inhibits elastase and trypsin stoichiometrically at the molar ratio of 1:1. Acts as a moderate inhibitor of plasmin and chymotrypsin. Does not inhibit thrombin, urokinase, kallikrein, tissue plasminogen activator, cathepsin G or the cysteine proteases papain, cathepsin B or cathepsin L. This is Serpin A3-3 (SERPINA3-3) from Bos taurus (Bovine).